Here is a 206-residue protein sequence, read N- to C-terminus: MLGNLYILSAPSGAGKSSLINALLADLPRTEVQLSISHTTRQPRVGETHGIHYYFTEHHEFESLIEQGHFLEWARVFDHYYGTSLPMIERSLAQGIDVFLDIDWQGARQIREKVPNVKTIFILPPSRAELEKRLVGRGQDSLETIAKRMEQAVSEMTHYNEFDYVIINDQFKTALTELKSILTAERLKQSAQAIRQQALIAELLAE.

In terms of domain architecture, Guanylate kinase-like spans 3–183; it reads GNLYILSAPS…ALTELKSILT (181 aa). Position 10–17 (10–17) interacts with ATP; sequence APSGAGKS.

This sequence belongs to the guanylate kinase family.

The protein localises to the cytoplasm. The enzyme catalyses GMP + ATP = GDP + ADP. Functionally, essential for recycling GMP and indirectly, cGMP. This chain is Guanylate kinase, found in Haemophilus ducreyi (strain 35000HP / ATCC 700724).